The sequence spans 319 residues: Biotin synthase (319 aa).

The Radical SAM core domain maps to 41 to 267 (YKGNKVKVCS…TPDIMICGGR (227 aa)). Positions 59, 63, and 66 each coordinate [4Fe-4S] cluster. C192 contributes to the [2Fe-2S] cluster binding site.

This sequence belongs to the radical SAM superfamily. Biotin synthase family. Homodimer. [4Fe-4S] cluster serves as cofactor. Requires [2Fe-2S] cluster as cofactor.

It carries out the reaction (4R,5S)-dethiobiotin + (sulfur carrier)-SH + 2 reduced [2Fe-2S]-[ferredoxin] + 2 S-adenosyl-L-methionine = (sulfur carrier)-H + biotin + 2 5'-deoxyadenosine + 2 L-methionine + 2 oxidized [2Fe-2S]-[ferredoxin]. It participates in cofactor biosynthesis; biotin biosynthesis; biotin from 7,8-diaminononanoate: step 2/2. Functionally, catalyzes the conversion of dethiobiotin (DTB) to biotin by the insertion of a sulfur atom into dethiobiotin via a radical-based mechanism. The sequence is that of Biotin synthase from Endomicrobium trichonymphae.